The primary structure comprises 217 residues: N-(5'-phosphoribosyl)anthranilate isomerase (217 aa).

The protein belongs to the TrpF family.

The enzyme catalyses N-(5-phospho-beta-D-ribosyl)anthranilate = 1-(2-carboxyphenylamino)-1-deoxy-D-ribulose 5-phosphate. It functions in the pathway amino-acid biosynthesis; L-tryptophan biosynthesis; L-tryptophan from chorismate: step 3/5. This Chlorobium chlorochromatii (strain CaD3) protein is N-(5'-phosphoribosyl)anthranilate isomerase.